Here is a 108-residue protein sequence, read N- to C-terminus: Integration host factor subunit alpha (108 aa).

The protein belongs to the bacterial histone-like protein family. As to quaternary structure, heterodimer of an alpha and a beta chain.

In terms of biological role, this protein is one of the two subunits of integration host factor, a specific DNA-binding protein that functions in genetic recombination as well as in transcriptional and translational control. The polypeptide is Integration host factor subunit alpha (Bartonella henselae (strain ATCC 49882 / DSM 28221 / CCUG 30454 / Houston 1) (Rochalimaea henselae)).